A 329-amino-acid polypeptide reads, in one-letter code: Synaptonemal complex central element protein 1 (329 aa).

Positions 1 to 29 are disordered; that stretch reads MATRPQPLGMEPEGSADLLHGPEGARGQY. Coiled-coil stretches lie at residues 54–167 and 194–294; these read RIEV…LETL and KEQL…ILAH. The segment at 291-329 is disordered; that stretch reads ILAHSTQNEEDSSWRMASPKPVEVHEETAQDQERPSSRT. The segment covering 312-329 has biased composition (basic and acidic residues); sequence VEVHEETAQDQERPSSRT.

The protein belongs to the SYCE family. In terms of assembly, homodimer. Found in a complex with SYCP1 and SYCE2. Interacts with SYCP1, SYCE2 and SYCE3. Interacts with SIX6OS1. Meiotic cells (at protein level). Expressed in the ovary and testis.

The protein resides in the nucleus. Its subcellular location is the chromosome. Functionally, major component of the transverse central element of synaptonemal complexes (SCS), formed between homologous chromosomes during meiotic prophase. Requires SYCP1 in order to be incorporated into the central element. May have a role in the synaptonemal complex assembly, stabilization and recombination. The protein is Synaptonemal complex central element protein 1 (Syce1) of Mus musculus (Mouse).